Consider the following 551-residue polypeptide: Cytochrome c lysine N-methyltransferase 1 (551 aa).

The SET domain maps to 46-273; the sequence is DKIELLRVSS…PNTEVLITYK (228 aa). The tract at residues 184-288 is SET-like; it reads IELLRQIYSA…LAMITKYGFD (105 aa).

It belongs to the class V-like SAM-binding methyltransferase superfamily.

It localises to the cytoplasm. The protein localises to the cytosol. It carries out the reaction L-lysyl-[cytochrome c] + S-adenosyl-L-methionine = N(6)-methyl-L-lysyl-[cytochrome c] + S-adenosyl-L-homocysteine + H(+). In terms of biological role, methyltransferase which mediates trimethylation of cytochrome c (CYC1). The chain is Cytochrome c lysine N-methyltransferase 1 (CTM1) from Candida glabrata (strain ATCC 2001 / BCRC 20586 / JCM 3761 / NBRC 0622 / NRRL Y-65 / CBS 138) (Yeast).